Consider the following 180-residue polypeptide: Endoribonuclease YbeY (180 aa).

Histidine 118, histidine 122, and histidine 128 together coordinate Zn(2+).

This sequence belongs to the endoribonuclease YbeY family. The cofactor is Zn(2+).

The protein resides in the cytoplasm. Its function is as follows. Single strand-specific metallo-endoribonuclease involved in late-stage 70S ribosome quality control and in maturation of the 3' terminus of the 16S rRNA. This is Endoribonuclease YbeY from Rhodococcus jostii (strain RHA1).